The chain runs to 232 residues: Ribonuclease P protein component 3 (232 aa).

The protein belongs to the eukaryotic/archaeal RNase P protein component 3 family. As to quaternary structure, consists of a catalytic RNA component and at least 4-5 protein subunits.

Its subcellular location is the cytoplasm. The catalysed reaction is Endonucleolytic cleavage of RNA, removing 5'-extranucleotides from tRNA precursor.. Part of ribonuclease P, a protein complex that generates mature tRNA molecules by cleaving their 5'-ends. The protein is Ribonuclease P protein component 3 of Halobacterium salinarum (strain ATCC 29341 / DSM 671 / R1).